The sequence spans 252 residues: tRNA (guanine-N(7)-)-methyltransferase (252 aa).

The S-adenosyl-L-methionine site is built by Glu-51, Asp-76, Asn-103, and Asp-125. Asp-125 is a catalytic residue. Substrate-binding positions include Lys-129, Asp-159, and 199–202; that span reads TYYE.

Belongs to the class I-like SAM-binding methyltransferase superfamily. TrmB family.

It carries out the reaction guanosine(46) in tRNA + S-adenosyl-L-methionine = N(7)-methylguanosine(46) in tRNA + S-adenosyl-L-homocysteine. The protein operates within tRNA modification; N(7)-methylguanine-tRNA biosynthesis. Its function is as follows. Catalyzes the formation of N(7)-methylguanine at position 46 (m7G46) in tRNA. The protein is tRNA (guanine-N(7)-)-methyltransferase of Bacteroides thetaiotaomicron (strain ATCC 29148 / DSM 2079 / JCM 5827 / CCUG 10774 / NCTC 10582 / VPI-5482 / E50).